Reading from the N-terminus, the 472-residue chain is NALCN channel auxiliary factor 2 (472 aa).

A helical membrane pass occupies residues leucine 47–alanine 67. A disordered region spans residues alanine 77–cysteine 114. Over residues proline 90–proline 110 the composition is skewed to pro residues. N-linked (GlcNAc...) asparagine glycans are attached at residues asparagine 120 and asparagine 193. Residues leucine 433 to glycine 453 traverse the membrane as a helical segment.

Belongs to the NALF family.

It is found in the membrane. Probable component of the NALCN channel complex, a channel that regulates the resting membrane potential and controls neuronal excitability. The polypeptide is NALCN channel auxiliary factor 2 (Homo sapiens (Human)).